Consider the following 363-residue polypeptide: 3-dehydroquinate synthase (363 aa).

NAD(+) contacts are provided by residues 109–113 (GASTD), 133–134 (TT), Lys-146, and Lys-155. Residues Glu-188, His-251, and His-267 each coordinate Zn(2+).

Belongs to the sugar phosphate cyclases superfamily. Dehydroquinate synthase family. The cofactor is NAD(+). It depends on Co(2+) as a cofactor. Zn(2+) serves as cofactor.

The protein localises to the cytoplasm. The catalysed reaction is 7-phospho-2-dehydro-3-deoxy-D-arabino-heptonate = 3-dehydroquinate + phosphate. It participates in metabolic intermediate biosynthesis; chorismate biosynthesis; chorismate from D-erythrose 4-phosphate and phosphoenolpyruvate: step 2/7. In terms of biological role, catalyzes the conversion of 3-deoxy-D-arabino-heptulosonate 7-phosphate (DAHP) to dehydroquinate (DHQ). The sequence is that of 3-dehydroquinate synthase from Streptomyces coelicolor (strain ATCC BAA-471 / A3(2) / M145).